A 148-amino-acid polypeptide reads, in one-letter code: Augurin (148 aa).

Residues 1 to 31 (MSTSSARPAVLALAGLALLLLLCLGPDGISG) form the signal peptide. Propeptides lie at residues 32 to 70 (NKLK…RAKR) and 133 to 148 (SRES…YNDY).

This sequence belongs to the augurin family. As to expression, expressed in the intermediate lobe of pituitary, glomerular layer of adrenal cortex, choroid plexus and atrioventricular node of the heart. Expressed in the brain with high expression in the choroid plexus and the epithelial lining of the central canal and expression in the gray matter of the spinal cord (at protein level).

It localises to the secreted. Its subcellular location is the cytoplasm. The protein localises to the apical cell membrane. Probable hormone that may attenuate cell proliferation and induce senescence of oligodendrocyte and neural precursor cells in the central nervous system. ECRG4-induced senescence is characterized by G1 arrest, RB1 dephosphorylation and accelerated CCND1 and CCND3 proteasomal degradation. The sequence is that of Augurin from Mus musculus (Mouse).